The following is a 268-amino-acid chain: uncharacterized protein (268 aa).

The protein belongs to the glycosyltransferase 2 family.

This is an uncharacterized protein from Bacillus subtilis (strain 168).